The primary structure comprises 368 residues: Probable staphylococcal-like nuclease CAN2 (368 aa).

Gly-2 carries the N-myristoyl glycine lipid modification. Cys-7 carries the S-palmitoyl cysteine lipid modification. The disordered stretch occupies residues 16–56 (DHYPYYKPTSRPHYQPPHYHGQPAAPPAPLQQQHLGPHGVT). Positions 27 to 38 (PHYQPPHYHGQP) are enriched in low complexity. One can recognise a TNase-like domain in the interval 168–344 (NTLPVYDKCI…RAANRGLWAS (177 aa)). Asp-181 provides a ligand contact to Ca(2+). Arg-251 is an active-site residue. Asp-256 provides a ligand contact to Ca(2+). Catalysis depends on residues Glu-259 and Arg-293.

Belongs to the thermonuclease family. Ca(2+) is required as a cofactor.

Its subcellular location is the cell membrane. Enzyme that catalyzes the hydrolysis of both DNA and RNA at the 5' position of the phosphodiester bond. The sequence is that of Probable staphylococcal-like nuclease CAN2 from Oryza sativa subsp. japonica (Rice).